The sequence spans 501 residues: Glucose-6-phosphate exchanger SLC37A2 (501 aa).

Residues 19–39 (SWFRGLILLLTFLIYACYHMS) form a helical membrane-spanning segment. Asn53, Asn62, and Asn68 each carry an N-linked (GlcNAc...) asparagine glycan. 5 helical membrane-spanning segments follow: residues 88–108 (GGVD…SGVF), 118–138 (LSAG…GYFW), 145–165 (YFVV…PSVV), 189–209 (SVGN…QWGL), and 210–230 (SFIV…LFLI). The disordered stretch occupies residues 240–262 (PPQHHGEPAENQDNPEDPGNSPC). 6 consecutive transmembrane segments (helical) span residues 302-322 (LCLL…PLYI), 334-354 (GDLS…AGLV), 362-382 (ATTC…YNYI), 391-411 (IVML…ITTA), 434-454 (AIID…AGLI), and 462-482 (VFYM…RLVY).

Belongs to the major facilitator superfamily. Organophosphate:Pi antiporter (OPA) (TC 2.A.1.4) family. As to expression, detected in intestine and pancreas. Lower expression is also detected in liver and kidney.

Its subcellular location is the endoplasmic reticulum membrane. The enzyme catalyses D-glucose 6-phosphate(in) + phosphate(out) = D-glucose 6-phosphate(out) + phosphate(in). Its activity is regulated as follows. Inhibited by vanadate but not by chlorogenic acid. Functionally, inorganic phosphate and glucose-6-phosphate antiporter. May transport cytoplasmic glucose-6-phosphate into the lumen of the endoplasmic reticulum and translocate inorganic phosphate into the opposite direction. Independent of a lumenal glucose-6-phosphatase. May not play a role in homeostatic regulation of blood glucose levels. The chain is Glucose-6-phosphate exchanger SLC37A2 from Homo sapiens (Human).